We begin with the raw amino-acid sequence, 175 residues long: Lithostathine (175 aa).

A signal peptide spans methionine 1–glycine 26. A propeptide spanning residues glutamate 27 to arginine 37 is cleaved from the precursor. The C-type lectin domain occupies isoleucine 38–phenylalanine 173. Intrachain disulfides connect cysteine 40–cysteine 51, cysteine 68–cysteine 171, and cysteine 146–cysteine 163.

Cleaved to give an A chain and a B chain joined by a disulfide bond. As to expression, in pancreatic acinar cells.

The protein resides in the secreted. Functionally, might act as an inhibitor of spontaneous calcium carbonate precipitation. In Bos taurus (Bovine), this protein is Lithostathine (PTP).